Here is a 395-residue protein sequence, read N- to C-terminus: Chorismate synthase (395 aa).

Arg-40 and Arg-46 together coordinate NADP(+). Positions 98–120 (LPREGRNAPLSRPRPGHADLTGM) are disordered. FMN contacts are provided by residues 134–136 (RSS), 256–257 (QA), Gly-301, 316–320 (KPIPS), and Arg-342.

The protein belongs to the chorismate synthase family. Homotetramer. The cofactor is FMNH2.

The catalysed reaction is 5-O-(1-carboxyvinyl)-3-phosphoshikimate = chorismate + phosphate. It functions in the pathway metabolic intermediate biosynthesis; chorismate biosynthesis; chorismate from D-erythrose 4-phosphate and phosphoenolpyruvate: step 7/7. In terms of biological role, catalyzes the anti-1,4-elimination of the C-3 phosphate and the C-6 proR hydrogen from 5-enolpyruvylshikimate-3-phosphate (EPSP) to yield chorismate, which is the branch point compound that serves as the starting substrate for the three terminal pathways of aromatic amino acid biosynthesis. This reaction introduces a second double bond into the aromatic ring system. The protein is Chorismate synthase of Bifidobacterium longum subsp. infantis (strain ATCC 15697 / DSM 20088 / JCM 1222 / NCTC 11817 / S12).